The following is a 466-amino-acid chain: tRNA(Ile)-lysidine synthase (466 aa).

42 to 47 (SGGVDS) lines the ATP pocket.

It belongs to the tRNA(Ile)-lysidine synthase family.

The protein resides in the cytoplasm. It catalyses the reaction cytidine(34) in tRNA(Ile2) + L-lysine + ATP = lysidine(34) in tRNA(Ile2) + AMP + diphosphate + H(+). In terms of biological role, ligates lysine onto the cytidine present at position 34 of the AUA codon-specific tRNA(Ile) that contains the anticodon CAU, in an ATP-dependent manner. Cytidine is converted to lysidine, thus changing the amino acid specificity of the tRNA from methionine to isoleucine. The chain is tRNA(Ile)-lysidine synthase from Anaplasma marginale (strain St. Maries).